Consider the following 69-residue polypeptide: Regulatory protein MokC (69 aa).

Residues 24–44 (KAMIVALIVICITAVVAALVT) traverse the membrane as a helical segment.

Belongs to the Hok/Gef family.

Its subcellular location is the cell inner membrane. Its function is as follows. Might be the toxic component of a type I toxin-antitoxin (TA) system. Regulatory peptide which completely overlaps hokC and enables hokC expression. The polypeptide is Regulatory protein MokC (mokC) (Escherichia coli (strain K12)).